A 1486-amino-acid polypeptide reads, in one-letter code: Chromosome partition protein MukB (1486 aa).

34–41 (GGNGAGKS) contributes to the ATP binding site. Coiled-coil stretches lie at residues 326–418 (LEAD…QYNQ), 444–480 (LETFQAKELEATEKMLSLEQKMSMAQTAHSQFEQAYQ), and 509–603 (RHLA…RAPV). The interval 666 to 783 (PGGSEDQRLN…EVPLFGRAAR (118 aa)) is flexible hinge. 3 coiled-coil regions span residues 835 to 923 (EAEI…AKLE), 977 to 1115 (EMLS…TAKA), and 1209 to 1266 (VEAI…QNVS).

The protein belongs to the SMC family. MukB subfamily. As to quaternary structure, homodimerization via its hinge domain. Binds to DNA via its C-terminal region. Interacts, and probably forms a ternary complex, with MukE and MukF via its C-terminal region. The complex formation is stimulated by calcium or magnesium. Interacts with tubulin-related protein FtsZ.

The protein localises to the cytoplasm. Its subcellular location is the nucleoid. Plays a central role in chromosome condensation, segregation and cell cycle progression. Functions as a homodimer, which is essential for chromosome partition. Involved in negative DNA supercoiling in vivo, and by this means organize and compact chromosomes. May achieve or facilitate chromosome segregation by condensation DNA from both sides of a centrally located replisome during cell division. This chain is Chromosome partition protein MukB, found in Escherichia fergusonii (strain ATCC 35469 / DSM 13698 / CCUG 18766 / IAM 14443 / JCM 21226 / LMG 7866 / NBRC 102419 / NCTC 12128 / CDC 0568-73).